The primary structure comprises 364 residues: Mannitol-1-phosphate 5-dehydrogenase (364 aa).

6-17 (VLHFGAGNIGRG) is an NAD(+) binding site.

This sequence belongs to the mannitol dehydrogenase family.

It catalyses the reaction D-mannitol 1-phosphate + NAD(+) = beta-D-fructose 6-phosphate + NADH + H(+). This chain is Mannitol-1-phosphate 5-dehydrogenase (mtlD), found in Mycoplasma pneumoniae (strain ATCC 29342 / M129 / Subtype 1) (Mycoplasmoides pneumoniae).